The chain runs to 118 residues: Small ribosomal subunit protein eS10 (118 aa).

Positions 91–118 (RLKNAPAERPRPSRGGPRRGGYRGRARD) are disordered. Residues 106-118 (GPRRGGYRGRARD) are compositionally biased toward basic residues.

It belongs to the eukaryotic ribosomal protein eS10 family. As to quaternary structure, component of the small ribosomal subunit. Mature ribosomes consist of a small (40S) and a large (60S) subunit. The 40S subunit contains about 32 different proteins and 1 molecule of RNA (18S). The 60S subunit contains 45 different proteins and 3 molecules of RNA (25S, 5.8S and 5S).

It is found in the cytoplasm. Component of the ribosome, a large ribonucleoprotein complex responsible for the synthesis of proteins in the cell. The small ribosomal subunit (SSU) binds messenger RNAs (mRNAs) and translates the encoded message by selecting cognate aminoacyl-transfer RNA (tRNA) molecules. The large subunit (LSU) contains the ribosomal catalytic site termed the peptidyl transferase center (PTC), which catalyzes the formation of peptide bonds, thereby polymerizing the amino acids delivered by tRNAs into a polypeptide chain. The nascent polypeptides leave the ribosome through a tunnel in the LSU and interact with protein factors that function in enzymatic processing, targeting, and the membrane insertion of nascent chains at the exit of the ribosomal tunnel. The protein is Small ribosomal subunit protein eS10 (RPS10) of Candida albicans (strain SC5314 / ATCC MYA-2876) (Yeast).